Reading from the N-terminus, the 312-residue chain is Homoserine O-acetyltransferase (312 aa).

Residue cysteine 142 is the Acyl-thioester intermediate of the active site. Residues lysine 163 and serine 192 each coordinate substrate. Residue histidine 235 is the Proton acceptor of the active site. The active site involves glutamate 237. Residue arginine 249 coordinates substrate.

The protein belongs to the MetA family.

The protein resides in the cytoplasm. The catalysed reaction is L-homoserine + acetyl-CoA = O-acetyl-L-homoserine + CoA. Its pathway is amino-acid biosynthesis; L-methionine biosynthesis via de novo pathway; O-acetyl-L-homoserine from L-homoserine: step 1/1. Functionally, transfers an acetyl group from acetyl-CoA to L-homoserine, forming acetyl-L-homoserine. The chain is Homoserine O-acetyltransferase from Ruegeria pomeroyi (strain ATCC 700808 / DSM 15171 / DSS-3) (Silicibacter pomeroyi).